A 353-amino-acid chain; its full sequence is Photosystem II D2 protein (353 aa).

Thr2 is subject to N-acetylthreonine. A Phosphothreonine modification is found at Thr2. A helical membrane pass occupies residues 41–61 (CAYFALGGWFTGTTFVTSWYT). His118 provides a ligand contact to chlorophyll a. A helical membrane pass occupies residues 125 to 141 (GFMLRQFEIARSVNLRP). Pheophytin a contacts are provided by Gln130 and Asn143. The helical transmembrane segment at 153-166 (VFVSVFLIYPLGQS) threads the bilayer. Position 198 (His198) interacts with chlorophyll a. A helical transmembrane segment spans residues 208 to 228 (AALLCAIHGATVENTLFEDGD). Residues His215 and Phe262 each coordinate a plastoquinone. Fe cation is bound at residue His215. His269 is a binding site for Fe cation. A helical transmembrane segment spans residues 279 to 295 (GLWMSAIGVVGLALNLR).

It belongs to the reaction center PufL/M/PsbA/D family. In terms of assembly, PSII is composed of 1 copy each of membrane proteins PsbA, PsbB, PsbC, PsbD, PsbE, PsbF, PsbH, PsbI, PsbJ, PsbK, PsbL, PsbM, PsbT, PsbX, PsbY, PsbZ, Psb30/Ycf12, at least 3 peripheral proteins of the oxygen-evolving complex and a large number of cofactors. It forms dimeric complexes. The D1/D2 heterodimer binds P680, chlorophylls that are the primary electron donor of PSII, and subsequent electron acceptors. It shares a non-heme iron and each subunit binds pheophytin, quinone, additional chlorophylls, carotenoids and lipids. There is also a Cl(-1) ion associated with D1 and D2, which is required for oxygen evolution. The PSII complex binds additional chlorophylls, carotenoids and specific lipids. is required as a cofactor.

It localises to the plastid. The protein resides in the chloroplast thylakoid membrane. It catalyses the reaction 2 a plastoquinone + 4 hnu + 2 H2O = 2 a plastoquinol + O2. Photosystem II (PSII) is a light-driven water:plastoquinone oxidoreductase that uses light energy to abstract electrons from H(2)O, generating O(2) and a proton gradient subsequently used for ATP formation. It consists of a core antenna complex that captures photons, and an electron transfer chain that converts photonic excitation into a charge separation. The D1/D2 (PsbA/PsbD) reaction center heterodimer binds P680, the primary electron donor of PSII as well as several subsequent electron acceptors. D2 is needed for assembly of a stable PSII complex. This is Photosystem II D2 protein from Tetradesmus obliquus (Green alga).